The following is a 388-amino-acid chain: 5-hydroxytryptamine receptor 4 (388 aa).

Over 1-19 (MDKLDANVSSKEGFGSVEK) the chain is Extracellular. N-linked (GlcNAc...) asparagine glycosylation occurs at Asn-7. A helical membrane pass occupies residues 20-44 (VVLLTFLSAVILMAILGNLLVMVAV). Over 45-54 (CRDRQLRKIK) the chain is Cytoplasmic. A helical membrane pass occupies residues 55 to 78 (TNYFIVSLAFADLLVSVLVMPFGA). The Extracellular portion of the chain corresponds to 79–92 (IELVQDIWVYGEMF). Residues 93–117 (CLVRTSLDVLLTTASIFHLCCISLD) traverse the membrane as a helical segment. A disulfide bridge connects residues Cys-93 and Cys-184. Residue Asp-100 coordinates serotonin. Topologically, residues 118 to 133 (RYYAICCQPLVYRNKM) are cytoplasmic. Residues 134-157 (TPLRIALMLGGCWVIPMFISFLPI) traverse the membrane as a helical segment. The Extracellular portion of the chain corresponds to 158–188 (MQGWNNIGIVDLIEKRKFNQNSNSTYCVFMV). The chain crosses the membrane as a helical span at residues 189–212 (NKPYAITCSVVAFYIPFLLMVLAY). The Cytoplasmic portion of the chain corresponds to 213–257 (YRIYVTAKEHARQIQVLQRAGAPAEGRPQPADQHSTHRMRTETKA). The helical transmembrane segment at 258-283 (AKTLCIIMGCFCLCWAPFFVTNIVDP) threads the bilayer. Asn-279 contributes to the serotonin binding site. Residues 284–290 (FIDYTVP) lie on the Extracellular side of the membrane. The chain crosses the membrane as a helical span at residues 291–314 (GQLWTAFLWLGYINSGLNPFLYAF). Topologically, residues 315–388 (LNKSFRRAFL…PLVAAQPIDT (74 aa)) are cytoplasmic.

This sequence belongs to the G-protein coupled receptor 1 family. Interacts (via C-terminus 330-346 AA) with GRK5; this interaction is promoted by 5-HT (serotonin).

It localises to the cell membrane. The protein resides in the endosome membrane. In terms of biological role, G-protein coupled receptor for 5-hydroxytryptamine (serotonin), a biogenic hormone that functions as a neurotransmitter, a hormone and a mitogen. Ligand binding causes a conformation change that triggers signaling via guanine nucleotide-binding proteins (G proteins) and modulates the activity of downstream effectors. HTR4 is coupled to G(s) G alpha proteins and mediates activation of adenylate cyclase activity. This chain is 5-hydroxytryptamine receptor 4 (HTR4), found in Cavia porcellus (Guinea pig).